We begin with the raw amino-acid sequence, 692 residues long: DNA ligase (692 aa).

NAD(+) contacts are provided by residues 35-39, 88-89, and Glu117; these read DLVYD and SL. The active-site N6-AMP-lysine intermediate is Lys119. NAD(+)-binding residues include Arg140, Glu176, Lys301, and Lys325. Zn(2+) contacts are provided by Cys416, Cys419, Cys434, and Cys439. A BRCT domain is found at 611 to 692; that stretch reads LTNQSNSWAS…FDLIKNSKKT (82 aa).

This sequence belongs to the NAD-dependent DNA ligase family. LigA subfamily. Mg(2+) is required as a cofactor. The cofactor is Mn(2+).

The enzyme catalyses NAD(+) + (deoxyribonucleotide)n-3'-hydroxyl + 5'-phospho-(deoxyribonucleotide)m = (deoxyribonucleotide)n+m + AMP + beta-nicotinamide D-nucleotide.. Its function is as follows. DNA ligase that catalyzes the formation of phosphodiester linkages between 5'-phosphoryl and 3'-hydroxyl groups in double-stranded DNA using NAD as a coenzyme and as the energy source for the reaction. It is essential for DNA replication and repair of damaged DNA. The protein is DNA ligase of Mesomycoplasma hyopneumoniae (strain 7448) (Mycoplasma hyopneumoniae).